The following is a 554-amino-acid chain: 3-(3-hydroxy-phenyl)propionate/3-hydroxycinnamic acid hydroxylase (554 aa).

Residues 17 to 46 and 285 to 295 contribute to the FAD site; these read QVAIAGAGPVGLMMANYLGQMGIDVLVVEK and FRIDRVLLAGD.

This sequence belongs to the PheA/TfdB FAD monooxygenase family. Requires FAD as cofactor.

It catalyses the reaction 3-(3-hydroxyphenyl)propanoate + NADH + O2 + H(+) = 3-(2,3-dihydroxyphenyl)propanoate + NAD(+) + H2O. It carries out the reaction (2E)-3-(3-hydroxyphenyl)prop-2-enoate + NADH + O2 + H(+) = (2E)-3-(2,3-dihydroxyphenyl)prop-2-enoate + NAD(+) + H2O. Its pathway is aromatic compound metabolism; 3-phenylpropanoate degradation. Its function is as follows. Catalyzes the insertion of one atom of molecular oxygen into position 2 of the phenyl ring of 3-(3-hydroxyphenyl)propionate (3-HPP) and hydroxycinnamic acid (3HCI). In Escherichia coli O139:H28 (strain E24377A / ETEC), this protein is 3-(3-hydroxy-phenyl)propionate/3-hydroxycinnamic acid hydroxylase.